A 126-amino-acid chain; its full sequence is MAKRIDHTGIMVRDINASITFYEEVLGMKLKDRITHTNGVIELAFLGFEDGPETEIELIQGYSSELPAEGKVHHIALLTDDIAAEYTKAEKMNAKFIDEEITTLPNGYRYFYIEGPDGEWIEFFQR.

The VOC domain maps to 4-126 (RIDHTGIMVR…DGEWIEFFQR (123 aa)). His7, Glu42, His74, and Glu122 together coordinate a divalent metal cation.

This sequence belongs to the glyoxalase I family.

This is an uncharacterized protein from Bacillus subtilis (strain 168).